The chain runs to 693 residues: tRNA (guanine(27)-N(2))-dimethyltransferase (693 aa).

A Nucleolar localization signal motif is present at residues 95-99 (HKLRR). Residues 144-166 (YHCIICSATITRRTDMLGHVRRH) form a C2H2-type zinc finger. Residues 187–648 (EILKEADTDV…APLMQFKSIL (462 aa)) form the Trm1 methyltransferase domain. S-adenosyl-L-methionine contacts are provided by arginine 220, aspartate 267, aspartate 317, and alanine 318. 4 residues coordinate Zn(2+): cysteine 448, cysteine 451, cysteine 473, and cysteine 475. A Glycyl lysine isopeptide (Lys-Gly) (interchain with G-Cter in SUMO2) cross-link involves residue lysine 545. Residues serine 572 and serine 667 each carry the phosphoserine modification.

This sequence belongs to the class I-like SAM-binding methyltransferase superfamily. Trm1 family.

The protein resides in the nucleus. It is found in the nucleolus. The catalysed reaction is guanosine(27) in tRNA(Tyr) + 2 S-adenosyl-L-methionine = N(2)-dimethylguanosine(27) in tRNA(Tyr) + 2 S-adenosyl-L-homocysteine + 2 H(+). Its function is as follows. Specifically dimethylates a single guanine residue at position 27 of tRNA(Tyr) using S-adenosyl-L-methionine as donor of the methyl groups. Dimethylation at position 27 of tRNA(Tyr) is required for efficient translation of tyrosine codons. Also required to maintain 3-(3-amino-3-carboxypropyl)uridine (acp3U) in the D-loop of several cytoplasmic tRNAs. The protein is tRNA (guanine(27)-N(2))-dimethyltransferase (TRMT1L) of Macaca fascicularis (Crab-eating macaque).